A 279-amino-acid polypeptide reads, in one-letter code: Diaminopimelate epimerase (279 aa).

Asn13, Gln46, and Asn66 together coordinate substrate. Cys75 functions as the Proton donor in the catalytic mechanism. Substrate is bound by residues 76 to 77 (GN), Asn161, Asn194, and 212 to 213 (ER). The active-site Proton acceptor is the Cys221. Position 222–223 (222–223 (GT)) interacts with substrate.

The protein belongs to the diaminopimelate epimerase family. In terms of assembly, homodimer.

Its subcellular location is the cytoplasm. The catalysed reaction is (2S,6S)-2,6-diaminopimelate = meso-2,6-diaminopimelate. The protein operates within amino-acid biosynthesis; L-lysine biosynthesis via DAP pathway; DL-2,6-diaminopimelate from LL-2,6-diaminopimelate: step 1/1. Functionally, catalyzes the stereoinversion of LL-2,6-diaminopimelate (L,L-DAP) to meso-diaminopimelate (meso-DAP), a precursor of L-lysine and an essential component of the bacterial peptidoglycan. This Alkalilimnicola ehrlichii (strain ATCC BAA-1101 / DSM 17681 / MLHE-1) protein is Diaminopimelate epimerase.